Reading from the N-terminus, the 179-residue chain is Molybdopterin synthase catalytic subunit (179 aa).

A compositionally biased stretch (polar residues) spans 1-10 (MTTSEDQTTP). Residues 1–21 (MTTSEDQTTPAHLDPKTYPRH) are disordered. Substrate-binding positions include 127–128 (HR), Lys-143, and 150–152 (KRE).

This sequence belongs to the MoaE family. MOCS2B subfamily. As to quaternary structure, heterotetramer; composed of 2 small (MOCS2A) and 2 large (MOCS2B) subunits.

It localises to the cytoplasm. The enzyme catalyses 2 [molybdopterin-synthase sulfur-carrier protein]-C-terminal-Gly-aminoethanethioate + cyclic pyranopterin phosphate + H2O = molybdopterin + 2 [molybdopterin-synthase sulfur-carrier protein]-C-terminal Gly-Gly + 2 H(+). It functions in the pathway cofactor biosynthesis; molybdopterin biosynthesis. In terms of biological role, catalytic subunit of the molybdopterin synthase complex, a complex that catalyzes the conversion of precursor Z into molybdopterin. Acts by mediating the incorporation of 2 sulfur atoms from thiocarboxylated MOCS2A into precursor Z to generate a dithiolene group. The sequence is that of Molybdopterin synthase catalytic subunit from Aspergillus oryzae (strain ATCC 42149 / RIB 40) (Yellow koji mold).